The primary structure comprises 201 residues: MELVLKDAQSALEVSETTFGRDFNEALVHQVVVAYAANARQGTRAQKTRAEVTGSGKKPWRQKGTGRARAGSVKGPIWRGGGVTFAAKTQDHSQKVNKKMYRGALKSIFSELVRQERLVVVESFGVEAPKTKELKAKLKAMNLEDVLIVTAEVDENLFLAARNLYKVDVRDVAGLDPVSLIAFNTVLVTADAVKQIEEMLA.

The segment at 45-72 (AQKTRAEVTGSGKKPWRQKGTGRARAGS) is disordered.

This sequence belongs to the universal ribosomal protein uL4 family. Part of the 50S ribosomal subunit.

One of the primary rRNA binding proteins, this protein initially binds near the 5'-end of the 23S rRNA. It is important during the early stages of 50S assembly. It makes multiple contacts with different domains of the 23S rRNA in the assembled 50S subunit and ribosome. In terms of biological role, forms part of the polypeptide exit tunnel. The sequence is that of Large ribosomal subunit protein uL4 from Shewanella frigidimarina (strain NCIMB 400).